A 66-amino-acid polypeptide reads, in one-letter code: MILVNVHAGNCDNTLRNFKKKLQRELYFRKMKEQRYYETPSAKRVRKAQEAARRQRKFARKKMFDE.

This sequence belongs to the bacterial ribosomal protein bS21 family.

This Rickettsia akari (strain Hartford) protein is Small ribosomal subunit protein bS21.